We begin with the raw amino-acid sequence, 372 residues long: NAD(P)H-quinone oxidoreductase subunit 1 (372 aa).

8 helical membrane-spanning segments follow: residues 27–47 (IIWLPIPMLLVLVAAVVGVLV), 97–117 (ILFTAGPILVLVPVILSWLIV), 128–148 (VGIGIFLWIALSSIQPIGLLM), 176–196 (LALSVLAIVLMTNSLSTIDIV), 204–224 (ILSWNIWRQPVGFIVFWICAL), 266–286 (ILSALLVSILYLGGWGFPIPV), 308–328 (SIGIVMTVLKAYLLVFIAILL), and 347–367 (FLLPISLANLLITAGLKLAFP).

This sequence belongs to the complex I subunit 1 family. In terms of assembly, NDH-1 is composed of at least 11 different subunits.

The protein localises to the cellular thylakoid membrane. The enzyme catalyses a plastoquinone + NADH + (n+1) H(+)(in) = a plastoquinol + NAD(+) + n H(+)(out). It catalyses the reaction a plastoquinone + NADPH + (n+1) H(+)(in) = a plastoquinol + NADP(+) + n H(+)(out). Functionally, NDH-1 shuttles electrons from an unknown electron donor, via FMN and iron-sulfur (Fe-S) centers, to quinones in the respiratory and/or the photosynthetic chain. The immediate electron acceptor for the enzyme in this species is believed to be plastoquinone. Couples the redox reaction to proton translocation, and thus conserves the redox energy in a proton gradient. This is NAD(P)H-quinone oxidoreductase subunit 1 from Prochlorococcus marinus (strain MIT 9312).